The primary structure comprises 545 residues: Alpha-galactosidase A (545 aa).

The signal sequence occupies residues 1 to 31; that stretch reads MIQGLESIMNQGTKRILLAATLAATPWQVYG. Cysteine 54 and cysteine 86 are joined by a disulfide. N-linked (GlcNAc...) asparagine glycans are attached at residues asparagine 57, asparagine 95, asparagine 101, and asparagine 131. A disulfide bridge links cysteine 134 with cysteine 164. The Nucleophile role is filled by aspartate 162. A glycan (N-linked (GlcNAc...) asparagine) is linked at asparagine 211. Aspartate 220 functions as the Proton donor in the catalytic mechanism. N-linked (GlcNAc...) asparagine glycosylation is found at asparagine 363 and asparagine 444. The Ricin B-type lectin domain occupies 421 to 518; sequence CSSVVPTGLV…KNAKTDGCLT (98 aa). Disulfide bonds link cysteine 438-cysteine 452 and cysteine 477-cysteine 490.

This sequence belongs to the glycosyl hydrolase 27 family. In terms of processing, a C-terminal Ser/Thr-rich region may provide possible sites for O-glycosylation.

It localises to the secreted. The enzyme catalyses Hydrolysis of terminal, non-reducing alpha-D-galactose residues in alpha-D-galactosides, including galactose oligosaccharides, galactomannans and galactolipids.. In terms of biological role, hydrolyzes a variety of simple alpha-D-galactoside as well as more complex molecules such as oligosaccharides and polysaccharides. The sequence is that of Alpha-galactosidase A (aglA) from Aspergillus niger.